Here is a 99-residue protein sequence, read N- to C-terminus: MPAVLREGDELILHLMIQPKASRDQIVGLHGDELKVAITAPPVDGQANSHLIKYLAKQFKVAKGQVRIVRGELGRHKTVAIESPRQIPAEIHALLETQG.

Belongs to the UPF0235 family.

In Aeromonas salmonicida (strain A449), this protein is UPF0235 protein ASA_3628.